Here is a 206-residue protein sequence, read N- to C-terminus: HTH-type transcriptional regulator Hpr (206 aa).

The region spanning 13-157 (ALLFSQRMAQ…MMCIIRNIYG (145 aa)) is the HTH marR-type domain. A DNA-binding region (H-T-H motif) is located at residues 63–86 (ISEIAKFGVMHVSTAFNFSKKLEE). The disordered stretch occupies residues 186 to 206 (SEELEDSADAAEKAAKANQIV).

As to quaternary structure, homodimer.

Negative regulator of protease production and sporulation. This Bacillus pumilus (strain SAFR-032) protein is HTH-type transcriptional regulator Hpr.